Consider the following 496-residue polypeptide: MHAKSLTELRAALDAKECSAVELAQHYLKRIDAARDLNAFVHVDAELTLAQAKAADAALAKGEAGPLAGLPIAHKDVFVTRGWRSTAGSKMLANYASPFDATVVARLSAAGMVTLGKTNMDEFAMGSSNENSAFGPVKNPWDTNAVPGGSSGGSSAAVAARLAPAATGTDTGGSIRQPASFAGVTGIKPTYGRVSRYGMIAFASSLDQGGPMARSAADCALLLNAMAGFDERDSTSLERADEDYTRHLGKTWAAGGDAGKPLAGLRIGLPAEYFGAGLADDVRAAIDAALKTYETLGATLVPVSLPKTELSIPVYYVIAPAEASSNLSRFDGVRYGHRAAEYRDLLDMYKKSRAEGFGPEVKRRILVGTYVLSHGYYDAYYLQAQKIRRIIAQDFQEAFKSCDVIMGPASPTVAWDIGAKGDDPVQMYLADIYTLSVSLAGLPGMSVPCGFGAGANAKRPVGLQIIGNYFDEARMLQVADAFQRATDWHVQEPAGV.

Catalysis depends on charge relay system residues Lys75 and Ser150. The active-site Acyl-ester intermediate is the Ser174.

The protein belongs to the amidase family. GatA subfamily. As to quaternary structure, heterotrimer of A, B and C subunits.

It catalyses the reaction L-glutamyl-tRNA(Gln) + L-glutamine + ATP + H2O = L-glutaminyl-tRNA(Gln) + L-glutamate + ADP + phosphate + H(+). Its function is as follows. Allows the formation of correctly charged Gln-tRNA(Gln) through the transamidation of misacylated Glu-tRNA(Gln) in organisms which lack glutaminyl-tRNA synthetase. The reaction takes place in the presence of glutamine and ATP through an activated gamma-phospho-Glu-tRNA(Gln). In Burkholderia thailandensis (strain ATCC 700388 / DSM 13276 / CCUG 48851 / CIP 106301 / E264), this protein is Glutamyl-tRNA(Gln) amidotransferase subunit A.